A 673-amino-acid polypeptide reads, in one-letter code: Gametogenetin (673 aa).

Positions 1 to 599 (MGNVQSEPSA…TSTAGASNKG (599 aa)) are disordered. Positions 14-30 (SRKEQASDRASDSRRTP) are enriched in basic and acidic residues. A compositionally biased stretch (low complexity) spans 70 to 83 (ASSSPLPLTLELPS). The interval 125–506 (RGLLEASHRG…APTPPSTLSP (382 aa)) is interaction with GGNBP1. Pro residues predominate over residues 161–178 (PAPPPTPLEPRKQLPPAP). Residues 192 to 202 (LASSATSPTES) show a composition bias toward polar residues. The segment covering 257–268 (SASGPLAAKASP) has biased composition (low complexity). Ser399 carries the phosphoserine modification. A compositionally biased stretch (low complexity) spans 413-424 (PRRPTPALLAPP). Pro residues predominate over residues 438–475 (RPVPPSPQQIPPLPPPPPTPPATPPPAPPPTPQPPALP). A compositionally biased stretch (low complexity) spans 504 to 531 (LSPTAAADQVPAATPATVTSQVPATATA). The tract at residues 511–673 (DQVPAATPAT…HYDLQATHST (163 aa)) is interactions with ZNF403/GGNBP2 and OAZ3. The span at 542-551 (TRTRRNKGPR) shows a compositional bias: basic residues.

Isoform 1 and isoform 3 interact with FANCL. Isoform 1 interacts with GGNBP1, ZNF403/GGNBP2 and OAZ3. Isoform 2 interacts with GGNBP1. As to expression, testis-specific. Specifically expressed in the germ cells and not in the somatic, Sertoli, or Leydig cells. In adult testis, expression starts in stage VIII pachytene spermatocytes, increases in stage IX and X pachytene spermatocytes, and culminates in stage XI diplotene spermatocytes and the meiotic cells in stage XII. Expression decreases slightly in step 1-3 spermatids, further decreases in step 4-11 spermatids, and is no longer detectable in step 12 spermatids and beyond. Isoform 2 is mainly expressed in testis.

The protein resides in the cytoplasm. It localises to the perinuclear region. It is found in the cytoplasmic vesicle. Its subcellular location is the nucleus. The protein localises to the nucleolus. In terms of biological role, may be involved in spermatogenesis. The chain is Gametogenetin (Ggn) from Mus musculus (Mouse).